The chain runs to 155 residues: uncharacterized protein (155 aa).

Positions 1 to 23 are cleaved as a signal peptide; that stretch reads MKIRSLSRFVLASTMFASFTASA.

This sequence to E.coli YkfB.

This is an uncharacterized protein from Escherichia coli (strain K12).